Reading from the N-terminus, the 616-residue chain is Putative L-type lectin-domain containing receptor kinase I.10 (616 aa).

The first 22 residues, 1–22 (MAWGLFQILMISFFHLIKLSSQ), serve as a signal peptide directing secretion. Over 23–288 (QETSFVYETF…RAEHKNLSPL (266 aa)) the chain is Extracellular. The segment at 24-258 (ETSFVYETFR…YQYVLSWSFS (235 aa)) is legume-lectin like. Asn-56, Asn-124, Asn-181, Asn-204, and Asn-225 each carry an N-linked (GlcNAc...) asparagine glycan. The chain crosses the membrane as a helical span at residues 289 to 309 (FIDLLGFLAIMGLCTLTGMYF). Over 310–616 (FKRGKYAEIT…SAASSATNSP (307 aa)) the chain is Cytoplasmic. Residues 343 to 616 (FHKDGFLGKG…SAASSATNSP (274 aa)) form the Protein kinase domain. Residues 349–357 (LGKGGFGEV) and Lys-371 each bind ATP. Asp-467 acts as the Proton acceptor in catalysis.

In the C-terminal section; belongs to the protein kinase superfamily. Ser/Thr protein kinase family. This sequence in the N-terminal section; belongs to the leguminous lectin family.

The protein resides in the cell membrane. The enzyme catalyses L-seryl-[protein] + ATP = O-phospho-L-seryl-[protein] + ADP + H(+). The catalysed reaction is L-threonyl-[protein] + ATP = O-phospho-L-threonyl-[protein] + ADP + H(+). The protein is Putative L-type lectin-domain containing receptor kinase I.10 (LECRK110) of Arabidopsis thaliana (Mouse-ear cress).